The sequence spans 445 residues: N-succinylarginine dihydrolase (445 aa).

Substrate is bound by residues 19-28 (AGLSFGNVAS), N110, and 137-138 (HR). E174 is an active-site residue. Position 214 (R214) interacts with substrate. Residue H250 is part of the active site. D252 and N363 together coordinate substrate. The Nucleophile role is filled by C369.

Belongs to the succinylarginine dihydrolase family. As to quaternary structure, homodimer.

The enzyme catalyses N(2)-succinyl-L-arginine + 2 H2O + 2 H(+) = N(2)-succinyl-L-ornithine + 2 NH4(+) + CO2. The protein operates within amino-acid degradation; L-arginine degradation via AST pathway; L-glutamate and succinate from L-arginine: step 2/5. In terms of biological role, catalyzes the hydrolysis of N(2)-succinylarginine into N(2)-succinylornithine, ammonia and CO(2). The chain is N-succinylarginine dihydrolase from Shewanella halifaxensis (strain HAW-EB4).